The following is an 88-amino-acid chain: uncharacterized protein (88 aa).

This is an uncharacterized protein from Banana bunchy top virus (isolate Autralia) (BBTV).